We begin with the raw amino-acid sequence, 660 residues long: Probable alpha-galactosidase D (660 aa).

An N-terminal signal peptide occupies residues 1–20 (MLLHFILYAALSSVVTSVSL). N-linked (GlcNAc...) asparagine glycans are attached at residues Asn47, Asn91, and Asn129. Cysteines 124 and 157 form a disulfide. Asp155 functions as the Nucleophile in the catalytic mechanism. 2 N-linked (GlcNAc...) asparagine glycosylation sites follow: Asn182 and Asn191. 200-204 (EWGIS) is a substrate binding site. Catalysis depends on Asp222, which acts as the Proton donor. 7 N-linked (GlcNAc...) asparagine glycosylation sites follow: Asn351, Asn403, Asn460, Asn492, Asn506, Asn514, and Asn584.

This sequence belongs to the glycosyl hydrolase 27 family.

Its subcellular location is the secreted. The catalysed reaction is Hydrolysis of terminal, non-reducing alpha-D-galactose residues in alpha-D-galactosides, including galactose oligosaccharides, galactomannans and galactolipids.. In terms of biological role, hydrolyzes a variety of simple alpha-D-galactoside as well as more complex molecules such as oligosaccharides and polysaccharides. The sequence is that of Probable alpha-galactosidase D (aglD) from Aspergillus niger (strain ATCC MYA-4892 / CBS 513.88 / FGSC A1513).